Here is a 90-residue protein sequence, read N- to C-terminus: MIQLSERQQDLLQVAEKYEQCHIEFYTAQSRLFGTEIMGEVVKTSLGTLKIAHPEEDLFEVALAYLASKKDILTAQERKDVLFYIQNNLC.

In Bacillus subtilis (Bacteriophage SP01), this protein is E22 protein (43).